The following is a 270-amino-acid chain: Glutamate racemase (270 aa).

Residues aspartate 7–serine 8 and tyrosine 39–glycine 40 contribute to the substrate site. The Proton donor/acceptor role is filled by cysteine 70. Asparagine 71–threonine 72 contributes to the substrate binding site. Cysteine 194 functions as the Proton donor/acceptor in the catalytic mechanism. Residue threonine 195 to histidine 196 coordinates substrate.

Belongs to the aspartate/glutamate racemases family.

The enzyme catalyses L-glutamate = D-glutamate. It functions in the pathway cell wall biogenesis; peptidoglycan biosynthesis. In terms of biological role, provides the (R)-glutamate required for cell wall biosynthesis. This Cereibacter sphaeroides (strain ATCC 17023 / DSM 158 / JCM 6121 / CCUG 31486 / LMG 2827 / NBRC 12203 / NCIMB 8253 / ATH 2.4.1.) (Rhodobacter sphaeroides) protein is Glutamate racemase.